The sequence spans 474 residues: Protein nucleotidyltransferase YdiU (474 aa).

The ATP site is built by glycine 89, glycine 91, arginine 92, lysine 112, aspartate 124, glycine 125, arginine 175, and arginine 182. Aspartate 256 serves as the catalytic Proton acceptor. Residues asparagine 257 and aspartate 266 each coordinate Mg(2+). Position 266 (aspartate 266) interacts with ATP.

The protein belongs to the SELO family. Mg(2+) is required as a cofactor. The cofactor is Mn(2+).

It carries out the reaction L-seryl-[protein] + ATP = 3-O-(5'-adenylyl)-L-seryl-[protein] + diphosphate. The enzyme catalyses L-threonyl-[protein] + ATP = 3-O-(5'-adenylyl)-L-threonyl-[protein] + diphosphate. The catalysed reaction is L-tyrosyl-[protein] + ATP = O-(5'-adenylyl)-L-tyrosyl-[protein] + diphosphate. It catalyses the reaction L-histidyl-[protein] + UTP = N(tele)-(5'-uridylyl)-L-histidyl-[protein] + diphosphate. It carries out the reaction L-seryl-[protein] + UTP = O-(5'-uridylyl)-L-seryl-[protein] + diphosphate. The enzyme catalyses L-tyrosyl-[protein] + UTP = O-(5'-uridylyl)-L-tyrosyl-[protein] + diphosphate. Nucleotidyltransferase involved in the post-translational modification of proteins. It can catalyze the addition of adenosine monophosphate (AMP) or uridine monophosphate (UMP) to a protein, resulting in modifications known as AMPylation and UMPylation. The sequence is that of Protein nucleotidyltransferase YdiU from Corynebacterium glutamicum (strain R).